Here is a 476-residue protein sequence, read N- to C-terminus: mRNA-capping enzyme subunit beta (476 aa).

A disordered region spans residues 1–133; the sequence is MNVGSILNDE…KLKSTNKPRR (133 aa). Composition is skewed to basic and acidic residues over residues 51–67 and 105–114; these read LKTK…EHSN and HPIEQDKSEK. The span at 123-132 shows a compositional bias: basic residues; that stretch reads SKLKSTNKPR.

This sequence belongs to the fungal TPase family. As to quaternary structure, heterodimer. The mRNA-capping enzyme is composed of two separate chains alpha and beta, respectively a mRNA guanylyltransferase and an mRNA 5'-triphosphate monophosphatase. Mg(2+) serves as cofactor.

It is found in the nucleus. It carries out the reaction a 5'-end triphospho-ribonucleoside in mRNA + H2O = a 5'-end diphospho-ribonucleoside in mRNA + phosphate + H(+). Its function is as follows. First step of mRNA capping. Converts the 5'-triphosphate end of a nascent mRNA chain into a diphosphate end. The chain is mRNA-capping enzyme subunit beta (CET1) from Debaryomyces hansenii (strain ATCC 36239 / CBS 767 / BCRC 21394 / JCM 1990 / NBRC 0083 / IGC 2968) (Yeast).